The primary structure comprises 203 residues: Membrane-spanning 4-domains subfamily A member 13 (203 aa).

The next 4 membrane-spanning stretches (helical) occupy residues 15-35 (VLGVIQIMIGIYHVLMWYFLL), 56-76 (MGTSLWGFAFVISGAFTVKAA), 84-104 (ILCTMSLNILCIIITIVAASL), and 141-161 (FAIALLYSISSCAYLPLSSIV).

This sequence belongs to the MS4A family.

The protein localises to the membrane. Its function is as follows. May be involved in signal transduction as a component of a multimeric receptor complex. This Mus musculus (Mouse) protein is Membrane-spanning 4-domains subfamily A member 13 (Ms4a13).